The chain runs to 246 residues: Probable 2-phosphosulfolactate phosphatase (246 aa).

It belongs to the ComB family. Requires Mg(2+) as cofactor.

The catalysed reaction is (2R)-O-phospho-3-sulfolactate + H2O = (2R)-3-sulfolactate + phosphate. The polypeptide is Probable 2-phosphosulfolactate phosphatase (Synechococcus sp. (strain WH7803)).